Here is a 105-residue protein sequence, read N- to C-terminus: Early nodulin-93 (105 aa).

A helical transmembrane segment spans residues 66 to 83 (TAQALIISTATAAAYFIV).

The protein resides in the membrane. The sequence is that of Early nodulin-93 from Glycine max (Soybean).